The chain runs to 206 residues: Guanylate kinase (206 aa).

In terms of domain architecture, Guanylate kinase-like spans 13-193; that stretch reads PLLLVVSGPS…AVSEIMSIIS (181 aa). Residue 20–27 coordinates ATP; that stretch reads GPSGVGKD.

The protein belongs to the guanylate kinase family.

It is found in the cytoplasm. The catalysed reaction is GMP + ATP = GDP + ADP. Functionally, essential for recycling GMP and indirectly, cGMP. The sequence is that of Guanylate kinase from Dehalococcoides mccartyi (strain ATCC BAA-2266 / KCTC 15142 / 195) (Dehalococcoides ethenogenes (strain 195)).